Consider the following 258-residue polypeptide: Isoprenyl transferase (258 aa).

Aspartate 38 is an active-site residue. Aspartate 38 serves as a coordination point for Mg(2+). Substrate contacts are provided by residues 39 to 42 (GNGR), tryptophan 43, arginine 51, histidine 55, and 83 to 85 (STE). Asparagine 86 functions as the Proton acceptor in the catalytic mechanism. Substrate contacts are provided by residues tryptophan 87, arginine 89, arginine 206, and 212 to 214 (RIS). Residue glutamate 225 participates in Mg(2+) binding.

Belongs to the UPP synthase family. As to quaternary structure, homodimer. Mg(2+) serves as cofactor.

Functionally, catalyzes the condensation of isopentenyl diphosphate (IPP) with allylic pyrophosphates generating different type of terpenoids. The polypeptide is Isoprenyl transferase (Bacillus thuringiensis subsp. konkukian (strain 97-27)).